A 388-amino-acid polypeptide reads, in one-letter code: Leucine aminopeptidase 1 (388 aa).

An N-terminal signal peptide occupies residues 1 to 19 (MKSLSLLALAAIAPPAAVA). Residues 20 to 88 (AVVDHQVPFE…SVKSHERIQV (69 aa)) constitute a propeptide that is removed on maturation. A glycan (N-linked (GlcNAc...) asparagine) is linked at Asn180. Residues His188, Asp207, Glu246, and Asp273 each coordinate Zn(2+). Cys322 and Cys326 are disulfide-bonded. A Zn(2+)-binding site is contributed by His355.

It belongs to the peptidase M28 family. M28E subfamily. Monomer. Zn(2+) is required as a cofactor.

The protein localises to the secreted. In terms of biological role, extracellular aminopeptidase that allows assimilation of proteinaceous substrates. This Coccidioides posadasii (strain RMSCC 757 / Silveira) (Valley fever fungus) protein is Leucine aminopeptidase 1 (LAP1).